Reading from the N-terminus, the 454-residue chain is L-serine dehydratase TdcG (454 aa).

It belongs to the iron-sulfur dependent L-serine dehydratase family. [4Fe-4S] cluster is required as a cofactor.

It catalyses the reaction L-serine = pyruvate + NH4(+). Its pathway is amino-acid degradation; L-threonine degradation via propanoate pathway. The sequence is that of L-serine dehydratase TdcG (tdcG) from Escherichia coli (strain K12).